The sequence spans 386 residues: TGF-beta-activated kinase 1 and MAP3K7-binding protein 1 (386 aa).

The PPM-type phosphatase domain occupies 22-327 (HSCRYSKQKN…EEMTVIYVKL (306 aa)).

As to quaternary structure, interacts with mom-4; the interaction enhances mom-4 kinase activity.

Its function is as follows. Involved in the Wnt signaling pathway by regulating mom-4 kinase activity. The sequence is that of TGF-beta-activated kinase 1 and MAP3K7-binding protein 1 from Caenorhabditis elegans.